The chain runs to 394 residues: Flap endonuclease 1 (394 aa).

Residues 1 to 104 (MGIKQLFSII…GELAKRFQRK (104 aa)) are N-domain. Position 34 (aspartate 34) interacts with Mg(2+). DNA-binding residues include arginine 47 and arginine 70. 5 residues coordinate Mg(2+): aspartate 86, glutamate 158, glutamate 160, aspartate 179, and aspartate 181. Positions 122–253 (DVEKFSRRTV…STALKLIREH (132 aa)) are I-domain. Residue glutamate 158 coordinates DNA. Glycine 231 and aspartate 233 together coordinate DNA. Position 233 (aspartate 233) interacts with Mg(2+). The tract at residues 341–349 (QQARIEGFF) is interaction with PCNA. The segment covering 356–383 (EEEKKAHKRKLEEQAEQKRKKVKEEKKE) has biased composition (basic and acidic residues). The tract at residues 356–394 (EEEKKAHKRKLEEQAEQKRKKVKEEKKEKAKLKAKPRGA) is disordered. Over residues 384-394 (KAKLKAKPRGA) the composition is skewed to basic residues.

It belongs to the XPG/RAD2 endonuclease family. FEN1 subfamily. Interacts with PCNA. Three molecules of FEN1 bind to one PCNA trimer with each molecule binding to one PCNA monomer. PCNA stimulates the nuclease activity without altering cleavage specificity. It depends on Mg(2+) as a cofactor. Post-translationally, phosphorylated. Phosphorylation upon DNA damage induces relocalization to the nuclear plasma.

It localises to the nucleus. The protein resides in the nucleolus. Its subcellular location is the nucleoplasm. The protein localises to the mitochondrion. Functionally, structure-specific nuclease with 5'-flap endonuclease and 5'-3' exonuclease activities involved in DNA replication and repair. During DNA replication, cleaves the 5'-overhanging flap structure that is generated by displacement synthesis when DNA polymerase encounters the 5'-end of a downstream Okazaki fragment. It enters the flap from the 5'-end and then tracks to cleave the flap base, leaving a nick for ligation. Also involved in the long patch base excision repair (LP-BER) pathway, by cleaving within the apurinic/apyrimidinic (AP) site-terminated flap. Acts as a genome stabilization factor that prevents flaps from equilibrating into structures that lead to duplications and deletions. Also possesses 5'-3' exonuclease activity on nicked or gapped double-stranded DNA, and exhibits RNase H activity. Also involved in replication and repair of rDNA and in repairing mitochondrial DNA. The chain is Flap endonuclease 1 from Sordaria macrospora (strain ATCC MYA-333 / DSM 997 / K(L3346) / K-hell).